The following is a 99-amino-acid chain: Class II hydrophobin 3 (99 aa).

A signal peptide spans M1–A18. Intrachain disulfides connect C31/C79, C40/C70, and C41/C53.

This sequence belongs to the cerato-ulmin hydrophobin family. As to quaternary structure, homodimer. Homodimers further self-assemble to form highly ordered films at water-air interfaces through intermolecular interactions.

It localises to the secreted. It is found in the cell wall. Functionally, aerial growth, conidiation, and dispersal of filamentous fungi in the environment rely upon a capability of their secreting small amphipathic proteins called hydrophobins (HPBs) with low sequence identity. Class I can self-assemble into an outermost layer of rodlet bundles on aerial cell surfaces, conferring cellular hydrophobicity that supports fungal growth, development and dispersal; whereas Class II form highly ordered films at water-air interfaces through intermolecular interactions but contribute nothing to the rodlet structure. Hyd3 is a class II hydrophobin required for barley root colonization. Hyd1 and Hyd3 are jointly required for conidial hydrophobicity and dispersal, but seem not to be involved in mycelia hydrophobicity. Inhibits conidial germination in environments not suitable for mycelial growth. Plays probably a role in intraspecific signaling or hyphal fusion. This Bionectria ochroleuca (Gliocladium roseum) protein is Class II hydrophobin 3.